Reading from the N-terminus, the 215-residue chain is Cytochrome b6 (215 aa).

Residues 32-52 (IFYCLGGITLTCFLIQVATGF) form a helical membrane-spanning segment. Position 35 (C35) interacts with heme c. Heme b-binding residues include H86 and H100. Transmembrane regions (helical) follow at residues 90-110 (ASMMVLMMILHVFRVYLTGGF), 116-136 (LTWVTGVILAVLTVSFGVTGY), and 186-206 (LHTFVLPLLTAVFMLMHFLMI). H187 and H202 together coordinate heme b.

This sequence belongs to the cytochrome b family. PetB subfamily. The 4 large subunits of the cytochrome b6-f complex are cytochrome b6, subunit IV (17 kDa polypeptide, PetD), cytochrome f and the Rieske protein, while the 4 small subunits are PetG, PetL, PetM and PetN. The complex functions as a dimer. Heme b is required as a cofactor. Heme c serves as cofactor.

It is found in the plastid. It localises to the chloroplast thylakoid membrane. Component of the cytochrome b6-f complex, which mediates electron transfer between photosystem II (PSII) and photosystem I (PSI), cyclic electron flow around PSI, and state transitions. The protein is Cytochrome b6 of Spirogyra maxima (Green alga).